Reading from the N-terminus, the 359-residue chain is MKVLSYLKNFYLFLAIGAIMQASENMGSQHQKTDERVIYLAGGCFWGLEAYMERIYGVIDASSGYANGKTSSTNYEKLHESDHAESVKVIYDPKKISLDKLLRYYFKVVDPVSVNKQGNDVGRQYRTGIYYVNSADKEVIDHALKALQKEVKGKIAIEVEPLKNYVRAEEYHQDYLKKHPSGYCHIDLKKADEVIVDDDKYTKPSDEVLKKKLTKLQYEVTQNKHTEKPFENEYYNKEEEGIYVDITTGEPLFSSADKYDSGCGWPSFSKPINKDVVKYEDDESLNRKRIEVLSRIGKAHLGHVFNDGPKELGGLRYCINSAALRFIPLKDMEKEGYGEFIPYIKKGELKKYINDKKSH.

The peptide methionine sulfoxide reductase A stretch occupies residues 36–189; that stretch reads RVIYLAGGCF…PSGYCHIDLK (154 aa). C44 is an active-site residue. Residues 206–329 form the MsrB domain; the sequence is DEVLKKKLTK…NSAALRFIPL (124 aa). Residue C318 is the Nucleophile of the active site.

This sequence in the N-terminal section; belongs to the MsrA Met sulfoxide reductase family. The protein in the C-terminal section; belongs to the MsrB Met sulfoxide reductase family.

The catalysed reaction is L-methionyl-[protein] + [thioredoxin]-disulfide + H2O = L-methionyl-(S)-S-oxide-[protein] + [thioredoxin]-dithiol. It carries out the reaction [thioredoxin]-disulfide + L-methionine + H2O = L-methionine (S)-S-oxide + [thioredoxin]-dithiol. It catalyses the reaction L-methionyl-[protein] + [thioredoxin]-disulfide + H2O = L-methionyl-(R)-S-oxide-[protein] + [thioredoxin]-dithiol. Functionally, has an important function as a repair enzyme for proteins that have been inactivated by oxidation. Catalyzes the reversible oxidation-reduction of methionine sulfoxide in proteins to methionine. The polypeptide is Peptide methionine sulfoxide reductase MsrA/MsrB (msrAB) (Helicobacter pylori (strain ATCC 700392 / 26695) (Campylobacter pylori)).